A 376-amino-acid polypeptide reads, in one-letter code: Pyrimidine monooxygenase RutA (376 aa).

FMN-binding positions include 61–62, N127, E136, 152–153, and S202; these read IK and RY.

It belongs to the NtaA/SnaA/DszA monooxygenase family. RutA subfamily.

The catalysed reaction is uracil + FMNH2 + NADH + O2 = (Z)-3-ureidoacrylate + FMN + NAD(+) + H2O + H(+). The enzyme catalyses thymine + FMNH2 + NADH + O2 = (Z)-2-methylureidoacrylate + FMN + NAD(+) + H2O + H(+). In terms of biological role, catalyzes the pyrimidine ring opening between N-3 and C-4 by an unusual flavin hydroperoxide-catalyzed mechanism, adding oxygen atoms in the process to yield ureidoacrylate peracid, that immediately reacts with FMN forming ureidoacrylate and FMN-N(5)-oxide. The FMN-N(5)-oxide reacts spontaneously with NADH to produce FMN. Requires the flavin reductase RutF to regenerate FMN in vivo. In Methylorubrum populi (strain ATCC BAA-705 / NCIMB 13946 / BJ001) (Methylobacterium populi), this protein is Pyrimidine monooxygenase RutA.